A 592-amino-acid polypeptide reads, in one-letter code: MRTHYCGHLNKSLAGQTVELCGWVNRRRDLGGLIFIDMRDREGIVQVVVDPDMADAYEVANTLRNEFCIKLTGEVRVRPESQVNKDMATGEVEILAKGLEIINRSDVLPLDFNQKNSEEQRLKYRYLDLRRPEMSDRIKLRAKASSFVRRFLDDNGFLDIETPVLTKATPEGARDYLVPSRVHKGSFYALPQSPQLFKQLLMMSGFDRYYQIVKCFRDEDLRADRQPEFTQIDIETSFMTADQVRATTEKMVREMWQELLNVDLGEFPVMPFSEAIRRFGSDKPDLRNPLELVDVADLVKDVEFKVFSGPANDEKGRVAVIRVPGGAELTRKQIDGYAEFVGIYGAKGLAWMKVNDRAAGMEGIQSPVAKFLNEDVINGILDRTQAESGDIILFGADKANIVAEALGALRLKLGKDLDITKEGTWAPLWVVDFPMFEEDDEGNLHAMHHPFTSPLGVTAEELKANPAAANSNAYDMVLNGYEVGGGSVRIHNAEMQAAVFDILGINAEEQQLKFGFLLDALKFGTPPHAGLAFGLDRLVMLLCGTENIRDVIAFPKTTAAACLLTDAPSLANPAALEELAIAVTVAKEKDAE.

Residue Glu171 coordinates L-aspartate. The segment at 195-198 is aspartate; that stretch reads QLFK. Residue Arg217 coordinates L-aspartate. ATP is bound by residues 217-219 and Gln226; that span reads RDE. Position 448 (His448) interacts with L-aspartate. Glu482 is an ATP binding site. Arg489 contacts L-aspartate. Residue 534–537 participates in ATP binding; that stretch reads GLDR.

It belongs to the class-II aminoacyl-tRNA synthetase family. Type 1 subfamily. As to quaternary structure, homodimer.

The protein localises to the cytoplasm. The enzyme catalyses tRNA(Asp) + L-aspartate + ATP = L-aspartyl-tRNA(Asp) + AMP + diphosphate. Catalyzes the attachment of L-aspartate to tRNA(Asp) in a two-step reaction: L-aspartate is first activated by ATP to form Asp-AMP and then transferred to the acceptor end of tRNA(Asp). This chain is Aspartate--tRNA ligase, found in Vibrio campbellii (strain ATCC BAA-1116).